Reading from the N-terminus, the 237-residue chain is Probable GTP-binding protein EngB (237 aa).

The EngB-type G domain occupies 23-209; the sequence is AVPEVAFAGR…QAVIAGWLNL (187 aa). Residues 31–38, 58–62, 82–85, 149–152, and 187–190 contribute to the GTP site; these read GRSNAGKS, GRTQH, DLPG, TKAD, and LFSS. Positions 38 and 60 each coordinate Mg(2+). Residues 214-237 form a disordered region; sequence KAEREPAAANSVPPAVPPASDPAA. Pro residues predominate over residues 227–237; that stretch reads PAVPPASDPAA.

This sequence belongs to the TRAFAC class TrmE-Era-EngA-EngB-Septin-like GTPase superfamily. EngB GTPase family. It depends on Mg(2+) as a cofactor.

Necessary for normal cell division and for the maintenance of normal septation. In Cupriavidus taiwanensis (strain DSM 17343 / BCRC 17206 / CCUG 44338 / CIP 107171 / LMG 19424 / R1) (Ralstonia taiwanensis (strain LMG 19424)), this protein is Probable GTP-binding protein EngB.